We begin with the raw amino-acid sequence, 64 residues long: MAKNKGVRIVITLECTECRSNPAKRSPGVSRYTTEKNRRNTTERLEIKKFCPHCNKMTPHKEIK.

This sequence belongs to the bacterial ribosomal protein bL33 family.

In Parasynechococcus marenigrum (strain WH8102), this protein is Large ribosomal subunit protein bL33.